We begin with the raw amino-acid sequence, 369 residues long: 3-isopropylmalate dehydrogenase (369 aa).

Residue 76–89 (GPKWDRNPSHLRPE) participates in NAD(+) binding. Residues arginine 96, arginine 106, arginine 134, and aspartate 223 each contribute to the substrate site. Residues aspartate 223, aspartate 247, and aspartate 251 each coordinate Mg(2+). 281-293 (GSAPDIAGQNKAN) provides a ligand contact to NAD(+).

This sequence belongs to the isocitrate and isopropylmalate dehydrogenases family. LeuB type 1 subfamily. Homodimer. Mg(2+) is required as a cofactor. Requires Mn(2+) as cofactor.

Its subcellular location is the cytoplasm. The catalysed reaction is (2R,3S)-3-isopropylmalate + NAD(+) = 4-methyl-2-oxopentanoate + CO2 + NADH. Its pathway is amino-acid biosynthesis; L-leucine biosynthesis; L-leucine from 3-methyl-2-oxobutanoate: step 3/4. In terms of biological role, catalyzes the oxidation of 3-carboxy-2-hydroxy-4-methylpentanoate (3-isopropylmalate) to 3-carboxy-4-methyl-2-oxopentanoate. The product decarboxylates to 4-methyl-2 oxopentanoate. In Priestia megaterium (strain DSM 319 / IMG 1521) (Bacillus megaterium), this protein is 3-isopropylmalate dehydrogenase (leuB).